We begin with the raw amino-acid sequence, 92 residues long: MALIQTNKDLISKGIKEFNILLNQQVFSDPAISEEAMVTVVNDWVSFYINYYKKQLSGEQDEQDKALQEFRQELNTLSASFLDKYRNFLKSS.

This sequence belongs to the AHSP family. Monomer. Forms a heterodimer with free alpha-hemoglobin. Does not bind beta-hemoglobin nor alpha(2)beta(2) hemoglobin A.

It localises to the cytoplasm. Functionally, acts as a chaperone to prevent the harmful aggregation of alpha-hemoglobin during normal erythroid cell development. Specifically protects free alpha-hemoglobin from precipitation. The polypeptide is Alpha-hemoglobin-stabilizing protein (AHSP) (Bos taurus (Bovine)).